Here is a 105-residue protein sequence, read N- to C-terminus: Small ribosomal subunit protein uS10 (105 aa).

It belongs to the universal ribosomal protein uS10 family. In terms of assembly, part of the 30S ribosomal subunit.

In terms of biological role, involved in the binding of tRNA to the ribosomes. This chain is Small ribosomal subunit protein uS10, found in Anaplasma phagocytophilum (strain HZ).